The sequence spans 520 residues: 5'-nucleotidase domain-containing protein 2 (520 aa).

The active-site Nucleophile is D73. D73, D75, and D358 together coordinate Mg(2+). The Proton donor role is filled by D75.

It belongs to the 5'(3')-deoxyribonucleotidase family. In terms of assembly, interacts with tyrosine 3-monooxygenase TH; the interaction results in reduced phosphorylation and decreased catalytic activity of TH.

The protein resides in the cytoplasm. Functionally, promotes dephosphorylation of tyrosine 3-monooxygenase TH which decreases TH catalytic activity and leads to reduced synthesis of catecholamines including dopamine, noradrenaline and adrenaline. The exact mechanism of activity is unknown but may act as a phosphatase or promote the activity of phosphatases or may inhibit phosphorylation by acting as a barrier to interfere with protein kinase access. The chain is 5'-nucleotidase domain-containing protein 2 (NT5DC2) from Homo sapiens (Human).